Reading from the N-terminus, the 57-residue chain is MKLTCVLIVAVLILTACQVIAADSSCWFCSTGFNKCCESTGDCMTYPSEYNASCPEA.

Residues 1 to 22 form the signal peptide; sequence MKLTCVLIVAVLILTACQVIAA. Intrachain disulfides connect Cys26-Cys37, Cys29-Cys43, and Cys36-Cys54.

It belongs to the conotoxin O1 superfamily. Expressed by the venom duct.

It localises to the secreted. Functionally, probable neurotoxin. The chain is Conotoxin Cal6.34 from Californiconus californicus (California cone).